We begin with the raw amino-acid sequence, 376 residues long: Cell adhesion molecule CEACAM18 (376 aa).

The N-terminal stretch at 1-30 (MDFSRPSFSPWRWLTLVASLLTCGICQASG) is a signal peptide. Topologically, residues 31 to 330 (QIFISPDSLL…PLPTVNRELY (300 aa)) are extracellular. Residues Asn69, Asn95, and Asn110 are each glycosylated (N-linked (GlcNAc...) asparagine). The Ig-like C2-type domain maps to 229-314 (PDYVSLWTQP…TQLTFYRDVT (86 aa)). Cys257 and Cys298 form a disulfide bridge. Residues 331-351 (IPGPLVIFLILLTSLGGAFVC) form a helical membrane-spanning segment. Topologically, residues 352–376 (RVLVYSLFQSCSRGKTCHKCPWQTN) are cytoplasmic.

This sequence belongs to the immunoglobulin superfamily. CEA family. In terms of tissue distribution, mostly expressed in the small and large intestine and at lower levels also in other organs.

It localises to the membrane. This chain is Cell adhesion molecule CEACAM18, found in Mus musculus (Mouse).